The primary structure comprises 203 residues: uncharacterized protein (203 aa).

Fe cation is bound by residues H34, E97, and H172.

Belongs to the hemerythrin family.

Its subcellular location is the mitochondrion. This is an uncharacterized protein from Schizosaccharomyces pombe (strain 972 / ATCC 24843) (Fission yeast).